The chain runs to 310 residues: Glutaminase 1 (310 aa).

Residues serine 66, asparagine 117, glutamate 161, asparagine 168, tyrosine 192, tyrosine 244, and valine 262 each contribute to the substrate site. Lysine 294 carries the post-translational modification N6-acetyllysine.

The protein belongs to the glutaminase family. In terms of assembly, homotetramer.

It carries out the reaction L-glutamine + H2O = L-glutamate + NH4(+). This Escherichia coli (strain K12) protein is Glutaminase 1.